A 345-amino-acid chain; its full sequence is Methylthioribose-1-phosphate isomerase (345 aa).

Substrate-binding positions include 44 to 46 (RGA), arginine 86, and glutamine 194. Catalysis depends on aspartate 235, which acts as the Proton donor. 245 to 246 (NK) contributes to the substrate binding site.

The protein belongs to the eIF-2B alpha/beta/delta subunits family. MtnA subfamily.

It carries out the reaction 5-(methylsulfanyl)-alpha-D-ribose 1-phosphate = 5-(methylsulfanyl)-D-ribulose 1-phosphate. Its pathway is amino-acid biosynthesis; L-methionine biosynthesis via salvage pathway; L-methionine from S-methyl-5-thio-alpha-D-ribose 1-phosphate: step 1/6. Its function is as follows. Catalyzes the interconversion of methylthioribose-1-phosphate (MTR-1-P) into methylthioribulose-1-phosphate (MTRu-1-P). This Desulfitobacterium hafniense (strain Y51) protein is Methylthioribose-1-phosphate isomerase.